The sequence spans 184 residues: ATP synthase subunit b, chloroplastic (184 aa).

Residues 27-49 traverse the membrane as a helical segment; the sequence is LATNPINLSVVFGVLIFFGKGVL.

The protein belongs to the ATPase B chain family. F-type ATPases have 2 components, F(1) - the catalytic core - and F(0) - the membrane proton channel. F(1) has five subunits: alpha(3), beta(3), gamma(1), delta(1), epsilon(1). F(0) has four main subunits: a(1), b(1), b'(1) and c(10-14). The alpha and beta chains form an alternating ring which encloses part of the gamma chain. F(1) is attached to F(0) by a central stalk formed by the gamma and epsilon chains, while a peripheral stalk is formed by the delta, b and b' chains.

It localises to the plastid. It is found in the chloroplast thylakoid membrane. Functionally, f(1)F(0) ATP synthase produces ATP from ADP in the presence of a proton or sodium gradient. F-type ATPases consist of two structural domains, F(1) containing the extramembraneous catalytic core and F(0) containing the membrane proton channel, linked together by a central stalk and a peripheral stalk. During catalysis, ATP synthesis in the catalytic domain of F(1) is coupled via a rotary mechanism of the central stalk subunits to proton translocation. Component of the F(0) channel, it forms part of the peripheral stalk, linking F(1) to F(0). This is ATP synthase subunit b, chloroplastic from Lobularia maritima (Sweet alyssum).